The following is an 848-amino-acid chain: MNKSSSASTVPPHSTPHTAHSTSSSSLPPLSSTHHTNTSSTSNNNNNSNNNHNHNHHHTTAATTTTSTTGTGTTAATTSTSTSSTIPINTAGIHTSNSNLATATNTPSSSPQVSTSVERRFWMNDRGSRRSSTSLTQQPLTMNRSSNKLHAAVSARDLTRLKQRLSQPRKAKIELAEYDSMDQTPLCAALRNGSHDIVREILFFYQSNKMDINDQDKSGYTPLHVAASHCDDQILMLLLNYEGINVNITNEDKNSALHYFCQKFRSPNCQEPFSIFLKKGVNVNAQNKNGETPLHKSIFNNTVRLLMVNMLLDAGAEVNVLNSRGESPLHFAVRLGREDLVSVLVKAGADITIKGNEKKTCYELSLTIGNQRVINFLKNVQDIFNWLKSIDLEQYWLNFVKEEIFMDLLLDIDERTLDSLGITYSGHRLKIIRNCRILRDQQLLSTANSNVTTGSGSSGSTTTTTTTTTTTSGCGGLNVPENKKVTQLSIESLKSNPPNSMDSTGSISSDDLKESLTNLEHWVIDHSELEYTLKLGSGSSGKVYKGLYKGKEVAVKVLKSITTQSQLEEFKKEFQIMGSIRSQFMVTFYGACIEPKLCMVMEYCSRDSLYHVMNTKKYDIGWDRFFQFTMQMTLGVQCLHNWTPQIVHRDFKSLNLLVNEDWECKVSDFGLSRFNTADNLETLSKIRGTFAYCSPEVAVGNGSLYTTKSDIYSIGIVFWELVTRVINGEYSRPYSEYSHIKMDFQIMLNSKEGLRPTLPQNTPPGLEALYKQCVNQEQTLRPSCEEIIETLNRLRHEYMSSKTTWDSLIRKLPSLSPPPQPTTTTTTTTSSSTSTNNINNNINNNNNT.

Low complexity-rich tracts occupy residues 1–52 (MNKS…NNNH), 60–85 (TAAT…TSST), and 95–116 (TSNS…VSTS). A disordered region spans residues 1–117 (MNKSSSASTV…SSSPQVSTSV (117 aa)). ANK repeat units lie at residues 181–212 (MDQT…KMDI), 218–248 (SGYT…NVNI), 252–285 (DKNS…NVNA), 289–320 (NGET…EVNV), and 324–353 (RGES…DITI). Residues 378–441 (KNVQDIFNWL…IRNCRILRDQ (64 aa)) enclose the SAM domain. The disordered stretch occupies residues 448 to 478 (NSNVTTGSGSSGSTTTTTTTTTTTSGCGGLN). Residues 452 to 472 (TTGSGSSGSTTTTTTTTTTTS) are compositionally biased toward low complexity. A Protein kinase domain is found at 529–799 (LEYTLKLGSG…TLNRLRHEYM (271 aa)). Residues 535–543 (LGSGSSGKV) and Lys-556 each bind ATP. The active-site Proton acceptor is Asp-650. The tract at residues 810-848 (RKLPSLSPPPQPTTTTTTTTSSSTSTNNINNNINNNNNT) is disordered. The span at 822–848 (TTTTTTTTSSSTSTNNINNNINNNNNT) shows a compositional bias: low complexity.

Belongs to the protein kinase superfamily. TKL Ser/Thr protein kinase family.

It catalyses the reaction L-seryl-[protein] + ATP = O-phospho-L-seryl-[protein] + ADP + H(+). It carries out the reaction L-threonyl-[protein] + ATP = O-phospho-L-threonyl-[protein] + ADP + H(+). The sequence is that of Probable serine/threonine-protein kinase DDB_G0278535 from Dictyostelium discoideum (Social amoeba).